Here is a 385-residue protein sequence, read N- to C-terminus: Ribosomal RNA large subunit methyltransferase G (385 aa).

Belongs to the methyltransferase superfamily. RlmG family.

Its subcellular location is the cytoplasm. The catalysed reaction is guanosine(1835) in 23S rRNA + S-adenosyl-L-methionine = N(2)-methylguanosine(1835) in 23S rRNA + S-adenosyl-L-homocysteine + H(+). In terms of biological role, specifically methylates the guanine in position 1835 (m2G1835) of 23S rRNA. This chain is Ribosomal RNA large subunit methyltransferase G, found in Vibrio parahaemolyticus serotype O3:K6 (strain RIMD 2210633).